The primary structure comprises 228 residues: Peptide deformylase (228 aa).

Disordered stretches follow at residues 1–28 and 116–138; these read MSQD…EGAV and GVPK…EPDR. Composition is skewed to polar residues over residues 8–18 and 123–133; these read TGCNTHSNTHS and NKQQANNSTSC. Positions 141 and 183 each coordinate Fe cation. E184 is a catalytic residue. H187 is a binding site for Fe cation.

Belongs to the polypeptide deformylase family. The cofactor is Fe(2+).

It catalyses the reaction N-terminal N-formyl-L-methionyl-[peptide] + H2O = N-terminal L-methionyl-[peptide] + formate. Functionally, removes the formyl group from the N-terminal Met of newly synthesized proteins. Requires at least a dipeptide for an efficient rate of reaction. N-terminal L-methionine is a prerequisite for activity but the enzyme has broad specificity at other positions. The sequence is that of Peptide deformylase from Tropheryma whipplei (strain Twist) (Whipple's bacillus).